The sequence spans 918 residues: Band 3 anion exchange protein (918 aa).

Residues 1–48 are disordered; that stretch reads MENDLSFGEDVMSYEEESDSAFPSPIRPTPPGHSGNYDLEQSRQEEDS. Residues 1 to 392 are Cytoplasmic-facing; that stretch reads MENDLSFGED…ISDFTDALDP (392 aa). A helical membrane pass occupies residues 393 to 416; it reads QVLAAVIFIYFAALSPAITFGGLL. Residues 417-424 are Extracellular-facing; the sequence is ADKTEHMM. The helical transmembrane segment at 425–445 threads the bilayer; it reads GVSELMISTCVQGIIFAFIAA. Residues 446-448 are Cytoplasmic-facing; sequence QPT. Residues 449–465 form a discontinuously helical membrane-spanning segment; it reads LVIGFSGPLLVFEEAFF. Residues 466–474 are Extracellular-facing; sequence AFCKSQEIE. Residues 475-495 form a helical membrane-spanning segment; sequence YIVGRIWVGLWLVIIVVVIVA. The Cytoplasmic segment spans residues 496 to 507; sequence VEGSFLVKFISR. A helical transmembrane segment spans residues 508–530; that stretch reads FTQEIFSILISLIFIYETFSKLG. The Extracellular portion of the chain corresponds to 531–583; sequence KIFKAHPLVLNYEHLNDSLDNPFHPVVKEHIEYHEDGNKTVHEVIHERAYPNT. Asparagine 546 and asparagine 568 each carry an N-linked (GlcNAc...) asparagine glycan. A helical transmembrane segment spans residues 584-604; the sequence is ALLSMCLMFGCFFIAYFLRQF. Over 605–615 the chain is Cytoplasmic; that stretch reads KNGHFLPGPIR. Residues 616-636 form a helical membrane-spanning segment; the sequence is RMIGDFGVPIAIFFMIAVDIT. Topologically, residues 637–676 are extracellular; that stretch reads IEDAYTQKLVVPKGLMVSNPNARGWFINPLGEKKPFPAWM. A helical membrane pass occupies residues 677–697; the sequence is MGACCVPALLVFILIFLESQI. Topologically, residues 698-713 are cytoplasmic; sequence TTLIVSKPERKMVKGS. Residues 714–732 form a helical membrane-spanning segment; the sequence is GFHLDLLILVTMGGIASLF. The discontinuously helical transmembrane segment at 733 to 750 threads the bilayer; that stretch reads GVPWLSAATVRSVTHANA. Residues 751–769 are Cytoplasmic-facing; it reads LTVMSKGPKPEIEKVLEQR. 2 consecutive transmembrane segments (helical) span residues 770 to 790 and 791 to 809; these read ISGM…PILK and MIPM…ITSL. At 810–847 the chain is on the cytoplasmic side; that stretch reads SGIQMWDRMLLLIVPRKYYPADAYAQRVTTMKMHLFTL. The discontinuously helical intramembrane region spans 848-878; that stretch reads IQMVCLGALWMVKMSAFSLALPFVLILTIPL. A lipid anchor (S-palmitoyl cysteine) is attached at cysteine 852. At 879–918 the chain is on the cytoplasmic side; it reads RMAITGTLFTDKEMKCLDASDGKVKFEEEPGEDMYESPLP.

This sequence belongs to the anion exchanger (TC 2.A.31) family. In terms of assembly, a dimer in solution, it spans the membrane asymmetrically and appears to be tetrameric.

The protein resides in the cell membrane. It catalyses the reaction hydrogencarbonate(in) + chloride(out) = hydrogencarbonate(out) + chloride(in). Functions both as a transporter that mediates electroneutral anion exchange across the cell membrane and as a structural protein. Major integral membrane glycoprotein of the erythrocyte membrane; required for normal flexibility and stability of the erythrocyte membrane and for normal erythrocyte shape via the interactions of its cytoplasmic domain with cytoskeletal proteins, glycolytic enzymes, and hemoglobin. Functions as a transporter that mediates the 1:1 exchange of inorganic anions across the erythrocyte membrane. Mediates chloride-bicarbonate exchange in the kidney, and is required for normal acidification of the urine. The protein is Band 3 anion exchange protein (slc4a1) of Oncorhynchus mykiss (Rainbow trout).